The following is a 68-amino-acid chain: MKNQFVLLLLAIVFLQMIFQSDAILSAIWSGIKSLFGKRGLENMDKFDELFDGDLSEADLDFLKELMR.

An N-terminal signal peptide occupies residues 1–23; that stretch reads MKNQFVLLLLAIVFLQMIFQSDA. Phe-36 bears the Phenylalanine amide mark. Residues 40-68 constitute a propeptide that is removed on maturation; sequence GLENMDKFDELFDGDLSEADLDFLKELMR.

The protein belongs to the non-disulfide-bridged peptide (NDBP) superfamily. Short antimicrobial peptide (group 4) family. In terms of processing, the non-amidated UyCT3 does not show antimicrobial activity. In terms of tissue distribution, expressed by the venom gland.

The protein resides in the secreted. It localises to the target cell membrane. Its function is as follows. Antimicrobial peptide that inhibits the growth of Gram-positive (S.aureus, MIC=10 uM) and Gram-negative bacteria (E.coli, MIC=15 uM and P.aeruginosa, MIC=6 uM). It also shows 35% of hemolysis when 15 uM are tested (95% at 50 uM). This chain is Antimicrobial peptide UyCT3, found in Urodacus yaschenkoi (Inland robust scorpion).